The following is a 312-amino-acid chain: Olfactory receptor 51B5 (312 aa).

The Extracellular portion of the chain corresponds to 1–23 (MSSSGSSHPFLLTGFPGLEEAHH). A helical transmembrane segment spans residues 24–44 (WISVFFLFMYISILFGNGTLL). The Cytoplasmic segment spans residues 45–52 (LLIKEDHN). The chain crosses the membrane as a helical span at residues 53–73 (LHEPMYFFLAMLAATDLGLAL). Residues 74 to 97 (TTMPTVLGVLWLDHREIGSAACFS) are Extracellular-facing. An intrachain disulfide couples Cys95 to Cys187. The helical transmembrane segment at 98 to 118 (QAYFIHSLSFLESGILLAMAY) threads the bilayer. Residues 119 to 137 (DRFIAICNPLRYTSVLTNT) are Cytoplasmic-facing. A helical transmembrane segment spans residues 138-158 (RVVKIGLGVLMRGFVSVVPPI). The Extracellular segment spans residues 159 to 194 (RPLYFFLYCHSHVLSHAFCLHQDVIKLACADTTFNR). The helical transmembrane segment at 195–215 (LYPAVLVVFIFVLDYLIIFIS) threads the bilayer. At 216–235 (YVLILKTVLSIASREERAKA) the chain is on the cytoplasmic side. Residues 236-256 (LITCVSHICCVLVFYVTVIGL) form a helical membrane-spanning segment. Residues 257 to 271 (SLIHRFGKQVPHIVH) are Extracellular-facing. Residues 272-292 (LIMSYAYFLFPPLMNPITYSV) traverse the membrane as a helical segment. At 293–312 (KTKQIQNAILHLFTTHRIGT) the chain is on the cytoplasmic side.

It belongs to the G-protein coupled receptor 1 family.

It localises to the cell membrane. Functionally, odorant receptor. The polypeptide is Olfactory receptor 51B5 (OR51B5) (Homo sapiens (Human)).